Consider the following 310-residue polypeptide: MQLNNNVTEFILLGLTQDPFWKKIVFVIFLRLYLGTLLGNLLIIISVKTSQALKNPMFFFLFYLSLSDTCLSTSITPRMIVDALLKKTTISFSECMIQVFSSHVFGCLEIFILILTAVDRYVDICKPLHYMTIISQWVCGVLMAVAWVGSCVHSLVQIFLALSLPFCGPNVINHCFCDLQPLLKQACSETYVVNLLLVSNSGAICAVSYVMLIFSYVIFLHSLRNHSAEVIKKALSTCVSHIIVVILFFGPCIFMYTCLATVFPMDKMIAVFYTVGTSFLNPVIYTLKNTEVKSAMRKLWSKKLITDDKR.

Residues 1-23 lie on the Extracellular side of the membrane; it reads MQLNNNVTEFILLGLTQDPFWKK. Residue asparagine 6 is glycosylated (N-linked (GlcNAc...) asparagine). Residues 24-47 form a helical membrane-spanning segment; it reads IVFVIFLRLYLGTLLGNLLIIISV. Topologically, residues 48-55 are cytoplasmic; sequence KTSQALKN. A helical membrane pass occupies residues 56–77; that stretch reads PMFFFLFYLSLSDTCLSTSITP. Topologically, residues 78–98 are extracellular; sequence RMIVDALLKKTTISFSECMIQ. A disulfide bridge links cysteine 95 with cysteine 187. A helical membrane pass occupies residues 99 to 118; the sequence is VFSSHVFGCLEIFILILTAV. Over 119–137 the chain is Cytoplasmic; that stretch reads DRYVDICKPLHYMTIISQW. A helical transmembrane segment spans residues 138-156; sequence VCGVLMAVAWVGSCVHSLV. Over 157–193 the chain is Extracellular; sequence QIFLALSLPFCGPNVINHCFCDLQPLLKQACSETYVV. The helical transmembrane segment at 194–217 threads the bilayer; it reads NLLLVSNSGAICAVSYVMLIFSYV. The Cytoplasmic segment spans residues 218 to 233; the sequence is IFLHSLRNHSAEVIKK. A helical transmembrane segment spans residues 234–256; sequence ALSTCVSHIIVVILFFGPCIFMY. Residues 257–267 are Extracellular-facing; the sequence is TCLATVFPMDK. The helical transmembrane segment at 268–287 threads the bilayer; sequence MIAVFYTVGTSFLNPVIYTL. Over 288–310 the chain is Cytoplasmic; the sequence is KNTEVKSAMRKLWSKKLITDDKR.

This sequence belongs to the G-protein coupled receptor 1 family.

The protein localises to the cell membrane. Functionally, odorant receptor. The polypeptide is Olfactory receptor 4C16 (OR4C16) (Homo sapiens (Human)).